A 209-amino-acid chain; its full sequence is High-affinity nitrate transporter 3.2 (209 aa).

Residues 1–22 (MAIHTLLFVSLLIFSLIESSSG) form the signal peptide. The chain crosses the membrane as a helical span at residues 177–197 (LDIASTFFSVFSVVSLFVFFV).

Belongs to the NAR2 family. As to expression, bearly detected in roots and shoots.

The protein localises to the cell membrane. Its function is as follows. Acts as a dual component transporter with NTR2.1. Required for high-affinity nitrate transport. The chain is High-affinity nitrate transporter 3.2 from Arabidopsis thaliana (Mouse-ear cress).